We begin with the raw amino-acid sequence, 238 residues long: tRNA (guanine-N(7)-)-methyltransferase (238 aa).

The S-adenosyl-L-methionine site is built by Glu70, Asp95, Asp122, and Asp145. Residue Asp145 is part of the active site. Residues Lys149, Asp181, and 216-219 (TKFE) each bind substrate.

It belongs to the class I-like SAM-binding methyltransferase superfamily. TrmB family.

The catalysed reaction is guanosine(46) in tRNA + S-adenosyl-L-methionine = N(7)-methylguanosine(46) in tRNA + S-adenosyl-L-homocysteine. The protein operates within tRNA modification; N(7)-methylguanine-tRNA biosynthesis. Its function is as follows. Catalyzes the formation of N(7)-methylguanine at position 46 (m7G46) in tRNA. This chain is tRNA (guanine-N(7)-)-methyltransferase, found in Neisseria gonorrhoeae (strain ATCC 700825 / FA 1090).